We begin with the raw amino-acid sequence, 347 residues long: Merozoite surface protein 2 (347 aa).

Positions methionine 1 to isoleucine 20 are cleaved as a signal peptide. Asparagine 22 and asparagine 36 each carry an N-linked (GlcNAc...) asparagine glycan. The polymorphic region stretch occupies residues alanine 44–serine 273. A run of 22 repeats spans residues glycine 53 to asparagine 60, glycine 61 to asparagine 68, glycine 69 to asparagine 76, glycine 77 to asparagine 84, glycine 85 to asparagine 88, glycine 89 to asparagine 92, glycine 93 to asparagine 96, glycine 97 to asparagine 100, glycine 101 to asparagine 104, glycine 105 to asparagine 108, glycine 109 to asparagine 112, glycine 113 to asparagine 116, glycine 117 to asparagine 120, glycine 121 to asparagine 124, glycine 125 to asparagine 128, glycine 129 to asparagine 132, glycine 133 to asparagine 136, glycine 137 to asparagine 140, glycine 141 to asparagine 144, glycine 145 to asparagine 152, glycine 153 to asparagine 156, and glycine 157 to asparagine 164. Positions glycine 53 to asparagine 164 are 6 X 8 AA repeats of G-A-V-A-S-A-G-N. Residues glycine 85–asparagine 156 are 16 X 4 AA repeats of G-A-G-N. A compositionally biased stretch (low complexity) spans glycine 165–asparagine 206. The disordered stretch occupies residues glycine 165–asparagine 308. 2 stretches are compositionally biased toward polar residues: residues valine 213–arginine 240 and lysine 247–proline 275. N-linked (GlcNAc...) asparagine glycosylation is present at asparagine 224. Asparagine 296 carries N-linked (GlcNAc...) asparagine glycosylation. An intrachain disulfide couples cysteine 304 to cysteine 312. Asparagine 320 and asparagine 321 each carry an N-linked (GlcNAc...) asparagine glycan. Residue asparagine 321 is the site of GPI-anchor amidated asparagine attachment. Positions serine 322–isoleucine 347 are cleaved as a propeptide — removed in mature form.

The protein resides in the cell membrane. Functionally, may play a role in the merozoite attachment to the erythrocyte. The polypeptide is Merozoite surface protein 2 (Plasmodium falciparum (isolate Nig32 / Nigeria)).